The sequence spans 254 residues: N-acetylglucosaminyldiphosphoundecaprenol N-acetyl-beta-D-mannosaminyltransferase (254 aa).

This sequence belongs to the glycosyltransferase 26 family. TagA/TarA subfamily.

It catalyses the reaction UDP-N-acetyl-alpha-D-mannosamine + N-acetyl-alpha-D-glucosaminyl-di-trans,octa-cis-undecaprenyl diphosphate = N-acetyl-beta-D-mannosaminyl-(1-&gt;4)-N-acetyl-alpha-D-glucosaminyl di-trans,octa-cis-undecaprenyl diphosphate + UDP + H(+). It functions in the pathway cell wall biogenesis; poly(ribitol phosphate) teichoic acid biosynthesis. Functionally, catalyzes the conversion of GlcNAc-PP-undecaprenol into ManNAc-GlcNAc-PP-undecaprenol, the first committed lipid intermediate in the de novo synthesis of teichoic acid. In Staphylococcus aureus (strain NCTC 8325 / PS 47), this protein is N-acetylglucosaminyldiphosphoundecaprenol N-acetyl-beta-D-mannosaminyltransferase.